Reading from the N-terminus, the 869-residue chain is Kinesin-like protein KIN-10A (869 aa).

Residues 1–36 (MAPTPSSSRSNQTQYTLIRTPQTKQRLNFHSKTPNP) show a composition bias toward polar residues. The interval 1–50 (MAPTPSSSRSNQTQYTLIRTPQTKQRLNFHSKTPNPDGSKDPSPPEHPVE) is disordered. The segment covering 38–50 (GSKDPSPPEHPVE) has biased composition (basic and acidic residues). In terms of domain architecture, Kinesin motor spans 48–367 (PVEVIGRIRD…LEYGAKAKCI (320 aa)). 129 to 136 (GPTGAGKS) provides a ligand contact to ATP. The stretch at 393–515 (RIAAMDEFII…EIEVEFRRSN (123 aa)) forms a coiled coil.

Belongs to the TRAFAC class myosin-kinesin ATPase superfamily. Kinesin family. KIN-10 subfamily. Binds microtubules.

The protein localises to the cytoplasm. It is found in the cytoskeleton. The protein resides in the phragmoplast. Functionally, probable plus end-directed motor protein that may contribute to the transport of Golgi-derived vesicles in the phragmoplast. The sequence is that of Kinesin-like protein KIN-10A from Arabidopsis thaliana (Mouse-ear cress).